We begin with the raw amino-acid sequence, 64 residues long: Large ribosomal subunit protein bL33c (64 aa).

Belongs to the bacterial ribosomal protein bL33 family.

Its subcellular location is the plastid. The protein resides in the chloroplast. This chain is Large ribosomal subunit protein bL33c, found in Phaeodactylum tricornutum (strain CCAP 1055/1).